Reading from the N-terminus, the 568-residue chain is Delta 8-(E)-sphingolipid desaturase (568 aa).

The Cytochrome b5 heme-binding domain occupies 2 to 77 (DNIISRGEIE…FRKWRIGRID (76 aa)). Heme-binding residues include histidine 37 and histidine 60. Transmembrane regions (helical) follow at residues 241 to 261 (FWSAFSMGCAWQQLVFIAHDA) and 272 to 292 (LDNIFGMIIASWVGGLSLGWW). The Histidine box-1 signature appears at 259–263 (HDAGH). The short motif at 296–300 (HNVHH) is the Histidine box-2 element. 3 consecutive transmembrane segments (helical) span residues 352–377 (YLYYPMLAFGRFNLYRLSWMHVLLGL), 389–409 (YFELCGLIFFNYWFFYLLVGC), and 421–441 (IMVSHITTMLVHVQITLSHFA). Positions 480 to 484 (QVVHH) match the Histidine box-3 motif. Residues 549–560 (ATGEREADEKTY) are compositionally biased toward basic and acidic residues. A disordered region spans residues 549–568 (ATGEREADEKTYRTKSIKNA).

The protein belongs to the fatty acid desaturase type 1 family.

It is found in the membrane. It catalyses the reaction an N-acylsphing-4-enine + 2 Fe(II)-[cytochrome b5] + O2 + 2 H(+) = a (4E,8E)-4-sphinga-4,8-dienine ceramide + 2 Fe(III)-[cytochrome b5] + 2 H2O. The protein operates within lipid metabolism; sphingolipid metabolism. In terms of biological role, delta(8)-fatty-acid desaturase which introduces a double bond at the 8-position in the long-chain base (LCB) of ceramides. Required for the formation of the di-unsaturated sphingoid base (E,E)-sphinga-4,8-dienine during glucosylceramide (GluCer) biosynthesis. The polypeptide is Delta 8-(E)-sphingolipid desaturase (Lachancea kluyveri (strain ATCC 58438 / CBS 3082 / BCRC 21498 / NBRC 1685 / JCM 7257 / NCYC 543 / NRRL Y-12651) (Yeast)).